The sequence spans 721 residues: Polyribonucleotide nucleotidyltransferase (721 aa).

Positions 490 and 496 each coordinate Mg(2+). Residues 557–618 (PRILTLKINP…EAVRQKIEGL (62 aa)) enclose the KH domain. An S1 motif domain is found at 625–693 (GEEYEGTVVK…DRGKIDLIRP (69 aa)). Residues 696 to 721 (EGKIAPREPRAARAGGDRGGRPPRRE) form a disordered region.

Belongs to the polyribonucleotide nucleotidyltransferase family. Mg(2+) is required as a cofactor.

The protein resides in the cytoplasm. The enzyme catalyses RNA(n+1) + phosphate = RNA(n) + a ribonucleoside 5'-diphosphate. Its function is as follows. Involved in mRNA degradation. Catalyzes the phosphorolysis of single-stranded polyribonucleotides processively in the 3'- to 5'-direction. This Deinococcus geothermalis (strain DSM 11300 / CIP 105573 / AG-3a) protein is Polyribonucleotide nucleotidyltransferase.